Here is a 415-residue protein sequence, read N- to C-terminus: Plasminogen activator inhibitor 2 (415 aa).

Cysteines 5 and 405 form a disulfide. Residues Asn-75, Asn-115, and Asn-339 are each glycosylated (N-linked (GlcNAc...) asparagine).

Belongs to the serpin family. Ov-serpin subfamily. In terms of assembly, interacts with PSMB1. The signal sequence is not cleaved.

The protein localises to the cytoplasm. It localises to the secreted. Its subcellular location is the extracellular space. Its function is as follows. Inhibits urokinase-type plasminogen activator. The monocyte derived PAI-2 is distinct from the endothelial cell-derived PAI-1. This chain is Plasminogen activator inhibitor 2 (SERPINB2), found in Homo sapiens (Human).